The sequence spans 117 residues: UPF0295 protein GK0479 (117 aa).

Helical transmembrane passes span 12-32 (IRTF…LGLF) and 42-62 (LFML…FWIG).

Belongs to the UPF0295 family.

Its subcellular location is the cell membrane. This Geobacillus kaustophilus (strain HTA426) protein is UPF0295 protein GK0479.